Reading from the N-terminus, the 443-residue chain is MSFFGSSHFGLPRLKPLSSKRSHIVSVLDIGSTKVVCMIGRLTPRQESEILPGRTHKVEIIGIGHQRSRGVKSGVIADLDALEGVIRLSVDAAERMAGLTVDSLIVNVSAGRLASDIYTASIDLGGQEVEASDLRKVLVAASQQSMRQDRAILHSLPTGYSLDGERGIRDPLSMYGDLLGVDMHVVTVERTALKNLELCVNRAHLSVEGMVATPYASGLAALVDDEVELGCAAIDMGGGTTTISVFAEGRLIHTDAIGLGGHHVTTDLARGLSTRIEDAERLKVVHGSALLNGADERDMISIPPIGEDDRDQPSQVSRALVTRIVRARIEETLELIRDRIQKSGFSPIVGKRVVLTGGASQLTGLPETARRILARNVRIGRPMGVAGLPVAAKGPAFSTACGLMIYPQVADIEIHAAQGGMFSPFGNGSGRIARVGQWLKESF.

It belongs to the FtsA/MreB family. As to quaternary structure, self-interacts. Interacts with FtsZ.

It localises to the cell inner membrane. In terms of biological role, cell division protein that is involved in the assembly of the Z ring. May serve as a membrane anchor for the Z ring. This is Cell division protein FtsA from Agrobacterium fabrum (strain C58 / ATCC 33970) (Agrobacterium tumefaciens (strain C58)).